The sequence spans 355 residues: S-adenosylmethionine:tRNA ribosyltransferase-isomerase (355 aa).

Belongs to the QueA family. As to quaternary structure, monomer.

The protein localises to the cytoplasm. It carries out the reaction 7-aminomethyl-7-carbaguanosine(34) in tRNA + S-adenosyl-L-methionine = epoxyqueuosine(34) in tRNA + adenine + L-methionine + 2 H(+). Its pathway is tRNA modification; tRNA-queuosine biosynthesis. Its function is as follows. Transfers and isomerizes the ribose moiety from AdoMet to the 7-aminomethyl group of 7-deazaguanine (preQ1-tRNA) to give epoxyqueuosine (oQ-tRNA). The chain is S-adenosylmethionine:tRNA ribosyltransferase-isomerase from Aeromonas hydrophila subsp. hydrophila (strain ATCC 7966 / DSM 30187 / BCRC 13018 / CCUG 14551 / JCM 1027 / KCTC 2358 / NCIMB 9240 / NCTC 8049).